The primary structure comprises 344 residues: 4'-phosphopantetheinyl transferase NpgA (344 aa).

The protein belongs to the P-Pant transferase superfamily.

It catalyses the reaction apo-[ACP] + CoA = holo-[ACP] + adenosine 3',5'-bisphosphate + H(+). In terms of biological role, transfers the 4'-phosphopantetheine moiety from coenzyme A to a Ser of an acyl-carrier-protein. The enzyme is able to transfer the cofactor to a broad range of enzymes with acyl- or peptidyl-carrier protein domains. Required for primary biological processes such as growth and asexual/sexual development, and activates target enzymes involved in the synthesis of metabolites such as fatty acids, polyketides and nonribosomal peptides, lysine, siderophore, penicillin, sterigmatocystin, shamixantone, dehydroaustinol, and pigments. The polypeptide is 4'-phosphopantetheinyl transferase NpgA (npgA) (Emericella nidulans (strain FGSC A4 / ATCC 38163 / CBS 112.46 / NRRL 194 / M139) (Aspergillus nidulans)).